Consider the following 476-residue polypeptide: Membrane-bound lytic murein transglycosylase F (476 aa).

The N-terminal stretch at methionine 1–threonine 15 is a signal peptide. A non-LT domain region spans residues glycine 16–valine 258. Residues lysine 259–asparagine 476 are LT domain. Residue glutamate 303 is part of the active site. The segment at glutamate 456–asparagine 476 is disordered.

The protein in the N-terminal section; belongs to the bacterial solute-binding protein 3 family. It in the C-terminal section; belongs to the transglycosylase Slt family.

It localises to the cell outer membrane. It carries out the reaction Exolytic cleavage of the (1-&gt;4)-beta-glycosidic linkage between N-acetylmuramic acid (MurNAc) and N-acetylglucosamine (GlcNAc) residues in peptidoglycan, from either the reducing or the non-reducing ends of the peptidoglycan chains, with concomitant formation of a 1,6-anhydrobond in the MurNAc residue.. In terms of biological role, murein-degrading enzyme that degrades murein glycan strands and insoluble, high-molecular weight murein sacculi, with the concomitant formation of a 1,6-anhydromuramoyl product. Lytic transglycosylases (LTs) play an integral role in the metabolism of the peptidoglycan (PG) sacculus. Their lytic action creates space within the PG sacculus to allow for its expansion as well as for the insertion of various structures such as secretion systems and flagella. The protein is Membrane-bound lytic murein transglycosylase F of Shewanella loihica (strain ATCC BAA-1088 / PV-4).